The sequence spans 42 residues: Photosystem I reaction center subunit IX (42 aa).

Residues 7-27 (YLSTAPVLATLWFGFLAGLLI) traverse the membrane as a helical segment.

This sequence belongs to the PsaJ family.

The protein localises to the plastid. The protein resides in the chloroplast thylakoid membrane. Functionally, may help in the organization of the PsaE and PsaF subunits. In Marchantia polymorpha (Common liverwort), this protein is Photosystem I reaction center subunit IX.